The chain runs to 807 residues: Anaphase-promoting complex subunit 4 (807 aa).

Residue Tyr469 is modified to Phosphotyrosine. The tract at residues 755–788 (DESSDDEEEAGGKPVKIKEEVLSESETEAHQDAA) is disordered. Ser757 and Ser758 each carry phosphoserine. The segment covering 770 to 785 (KIKEEVLSESETEAHQ) has biased composition (basic and acidic residues). Lys772 is covalently cross-linked (Glycyl lysine isopeptide (Lys-Gly) (interchain with G-Cter in SUMO2)). Residues Ser777 and Ser779 each carry the phosphoserine modification. Residue Lys797 forms a Glycyl lysine isopeptide (Lys-Gly) (interchain with G-Cter in SUMO2) linkage.

The protein belongs to the APC4 family. The mammalian APC/C is composed at least of 14 distinct subunits ANAPC1, ANAPC2, CDC27/APC3, ANAPC4, ANAPC5, CDC16/APC6, ANAPC7, CDC23/APC8, ANAPC10, ANAPC11, CDC26/APC12, ANAPC13, ANAPC15 and ANAPC16 that assemble into a complex of at least 19 chains with a combined molecular mass of around 1.2 MDa; APC/C interacts with FZR1 and FBXO5. In the context of the APC/C complex, directly interacts with UBE2S. Interacts with FBXO43.

The protein resides in the nucleus. It participates in protein modification; protein ubiquitination. Component of the anaphase promoting complex/cyclosome (APC/C), a cell cycle-regulated E3 ubiquitin ligase that controls progression through mitosis and the G1 phase of the cell cycle. The APC/C complex acts by mediating ubiquitination and subsequent degradation of target proteins: it mainly mediates the formation of 'Lys-11'-linked polyubiquitin chains and, to a lower extent, the formation of 'Lys-48'- and 'Lys-63'-linked polyubiquitin chains. The APC/C complex catalyzes assembly of branched 'Lys-11'-/'Lys-48'-linked branched ubiquitin chains on target proteins. The chain is Anaphase-promoting complex subunit 4 (Anapc4) from Mus musculus (Mouse).